Here is a 131-residue protein sequence, read N- to C-terminus: Small ribosomal subunit protein uS8 (131 aa).

It belongs to the universal ribosomal protein uS8 family. Part of the 30S ribosomal subunit. Contacts proteins S5 and S12.

Its function is as follows. One of the primary rRNA binding proteins, it binds directly to 16S rRNA central domain where it helps coordinate assembly of the platform of the 30S subunit. The chain is Small ribosomal subunit protein uS8 from Delftia acidovorans (strain DSM 14801 / SPH-1).